The following is a 435-amino-acid chain: GTPase Der (435 aa).

EngA-type G domains are found at residues 4–167 and 175–350; these read PIVA…SPDA and ISFS…ENKN. Residues 10-17, 57-61, 119-122, 181-188, 228-232, and 293-296 contribute to the GTP site; these read GQPNVGKS, DTGGI, NKAD, GRPNVGKS, DTAGI, and NKWD. Positions 351–435 constitute a KH-like domain; sequence QRIQSSVLND…PIKILPRKRK (85 aa).

The protein belongs to the TRAFAC class TrmE-Era-EngA-EngB-Septin-like GTPase superfamily. EngA (Der) GTPase family. As to quaternary structure, associates with the 50S ribosomal subunit.

GTPase that plays an essential role in the late steps of ribosome biogenesis. The chain is GTPase Der from Lactobacillus delbrueckii subsp. bulgaricus (strain ATCC 11842 / DSM 20081 / BCRC 10696 / JCM 1002 / NBRC 13953 / NCIMB 11778 / NCTC 12712 / WDCM 00102 / Lb 14).